The following is a 316-amino-acid chain: Probable cell division protein WhiA (316 aa).

Residues 275 to 309 (TLKELGEMVSSGKISKSGINHRLRKLDEIAEQLRS) constitute a DNA-binding region (H-T-H motif).

The protein belongs to the WhiA family.

Involved in cell division and chromosome segregation. The polypeptide is Probable cell division protein WhiA (Bacillus licheniformis (strain ATCC 14580 / DSM 13 / JCM 2505 / CCUG 7422 / NBRC 12200 / NCIMB 9375 / NCTC 10341 / NRRL NRS-1264 / Gibson 46)).